The sequence spans 445 residues: Histone acetyltransferase of the MYST family 1 (445 aa).

Residues 60 to 118 (LEVGTRVMCQWRDGKYHPVKVIERRKNYNGGHNDYEYYVHYTEFNRRLDEWIKLEQLDL) enclose the Tudor-knot domain. Residues 169 to 440 (TKVKNIATIE…VDVSKMIWTP (272 aa)) enclose the MYST-type HAT domain. Residues 202–227 (LFFCEFCLSFMKRKEQLQRHMRKCDL) form a C2HC MYST-type zinc finger. Lys-269 carries the N6-acetyllysine; by autocatalysis modification. Acetyl-CoA contacts are provided by residues 312 to 314 (ILT) and 319 to 325 (QRKGYGK). The Proton donor/acceptor role is filled by Glu-345. Acetyl-CoA is bound at residue Ser-349.

This sequence belongs to the MYST (SAS/MOZ) family. In terms of assembly, interacts with MRG1 and MRG2. Component of the NuA4 histone acetyltransferase complex. Autoacetylation at Lys-269 is required for proper function. Expressed in cotyledons, leaves, stems, roots and, at higher levels in developing flowers, particularly in the anthers and gynoecia. Constitutively expressed in all tissues, predominantly in shoot apical meristem.

It is found in the nucleus. It carries out the reaction L-lysyl-[protein] + acetyl-CoA = N(6)-acetyl-L-lysyl-[protein] + CoA + H(+). Histone acetyltransferase which may be involved in transcriptional activation. Acetylates 'Lys-5' of histone H4 (H4K5ac). Essential for gametophyte development. Involved in DNA repair after UV-B exposure. Negative regulator of flowering controlling the H4K5ac levels in the FLC chromatin. The sequence is that of Histone acetyltransferase of the MYST family 1 from Arabidopsis thaliana (Mouse-ear cress).